The following is a 267-amino-acid chain: Movement protein (267 aa).

Belongs to the tobamovirus movement protein family.

It is found in the host cytoplasm. The protein localises to the host cytoskeleton. Its subcellular location is the host cell junction. The protein resides in the host plasmodesma. In terms of biological role, transports viral genome to neighboring plant cells directly through plasmosdesmata, without any budding. The movement protein allows efficient cell to cell propagation, by bypassing the host cell wall barrier. Forms a ribonucleoprotein complex with viral RNA. Binds microtubules and modulates microtubule stability. Can bind double-stranded DNA. The polypeptide is Movement protein (MP) (Brassicaceae (TVCV)).